We begin with the raw amino-acid sequence, 204 residues long: Thymidylate kinase (204 aa).

11–18 (GLDKSGKT) contributes to the ATP binding site.

The protein belongs to the thymidylate kinase family.

It catalyses the reaction dTMP + ATP = dTDP + ADP. It functions in the pathway pyrimidine metabolism; dTTP biosynthesis. This is Thymidylate kinase (TMK) from Cowpox virus (strain GRI-90 / Grishak) (CPV).